The sequence spans 302 residues: Urease accessory protein UreD (302 aa).

This sequence belongs to the UreD family. UreD, UreF and UreG form a complex that acts as a GTP-hydrolysis-dependent molecular chaperone, activating the urease apoprotein by helping to assemble the nickel containing metallocenter of UreC. The UreE protein probably delivers the nickel.

The protein localises to the cytoplasm. Functionally, required for maturation of urease via the functional incorporation of the urease nickel metallocenter. This Pseudoalteromonas translucida (strain TAC 125) protein is Urease accessory protein UreD.